Consider the following 253-residue polypeptide: UDP-Glc:alpha-D-GlcNAc-diphosphoundecaprenol beta-1,3-glucosyltransferase WfgD (253 aa).

Belongs to the glycosyltransferase 2 family. Requires Mn(2+) as cofactor. The cofactor is Mg(2+).

Its subcellular location is the cell inner membrane. The catalysed reaction is N-acetyl-alpha-D-glucosaminyl-di-trans,octa-cis-undecaprenyl diphosphate + UDP-alpha-D-glucose = beta-D-Glc-(1-&gt;3)-alpha-D-GlcNAc-di-trans,octa-cis-undecaprenyl diphosphate + UDP + H(+). Its pathway is bacterial outer membrane biogenesis; lipopolysaccharide biosynthesis. Functionally, catalyzes the addition of Glc, the second sugar moiety of the O152-antigen repeating unit, to GlcNAc-pyrophosphate-undecaprenol. This Escherichia coli protein is UDP-Glc:alpha-D-GlcNAc-diphosphoundecaprenol beta-1,3-glucosyltransferase WfgD (wfgD).